Consider the following 665-residue polypeptide: MQALSILPLKSGLLVGSRLEFELDCSCFVVSPKTTRKRLCFLEQACFGSSSSISSFIFVSSNRKVLFLCEPKRSLLGSSFGVGWATEQRELELGEEEVSTEDLSSANGGEKNNLRVDVRELAFSLRAAKTADDVDAVLKDKGELPLQVFCAMIKGFGKDKRLKPAVAVVDWLKRKKSESGGVIGPNLFIYNSLLGAMRGFGEAEKILKDMEEEGIVPNIVTYNTLMVIYMEEGEFLKALGILDLTKEKGFEPNPITYSTALLVYRRMEDGMGALEFFVELREKYAKREIGNDVGYDWEFEFVKLENFIGRICYQVMRRWLVKDDNWTTRVLKLLNAMDSAGVRPSREEHERLIWACTREEHYIVGKELYKRIRERFSEISLSVCNHLIWLMGKAKKWWAALEIYEDLLDEGPEPNNLSYELVVSHFNILLSAASKRGIWRWGVRLLNKMEDKGLKPQRRHWNAVLVACSKASETTAAIQIFKAMVDNGEKPTVISYGALLSALEKGKLYDEAFRVWNHMIKVGIEPNLYAYTTMASVLTGQQKFNLLDTLLKEMASKGIEPSVVTFNAVISGCARNGLSGVAYEWFHRMKSENVEPNEITYEMLIEALANDAKPRLAYELHVKAQNEGLKLSSKPYDAVVKSAETYGATIDLNLLGPRPDKKNRP.

The transit peptide at 1 to 68 directs the protein to the chloroplast; it reads MQALSILPLK…VSSNRKVLFL (68 aa). PPR repeat units follow at residues 145 to 179, 181 to 217, 218 to 252, 253 to 283, 309 to 344, 345 to 375, 380 to 414, 422 to 456, 457 to 491, 492 to 526, 527 to 561, 562 to 596, and 597 to 631; these read PLQVFCAMIKGFGKDKRLKPAVAVVDWLKRKKSES, GVIGPNLFIYNSLLGAMRGFGEAEKILKDMEEEGIVP, NIVTYNTLMVIYMEEGEFLKALGILDLTKEKGFEP, NPITYSTALLVYRRMEDGMGALEFFVELREK, GRICYQVMRRWLVKDDNWTTRVLKLLNAMDSAGVRP, SREEHERLIWACTREEHYIVGKELYKRIRER, SLSVCNHLIWLMGKAKKWWAALEIYEDLLDEGPEP, VVSHFNILLSAASKRGIWRWGVRLLNKMEDKGLKP, QRRHWNAVLVACSKASETTAAIQIFKAMVDNGEKP, TVISYGALLSALEKGKLYDEAFRVWNHMIKVGIEP, NLYAYTTMASVLTGQQKFNLLDTLLKEMASKGIEP, SVVTFNAVISGCARNGLSGVAYEWFHRMKSENVEP, and NEITYEMLIEALANDAKPRLAYELHVKAQNEGLKL.

This sequence belongs to the PPR family. P subfamily. Interacts with HCF173.

Its subcellular location is the plastid. The protein localises to the chloroplast thylakoid membrane. It is found in the chloroplast stroma. Its function is as follows. Required for light-regulated photosystem II (PSII) biogenesis and grana thylakoids formation by binding to the 5' UTR of PSII subunit mRNAs (e.g. psbJ, psbN and psbA) in a light-dependent manner through a redox-based mechanism, and facilitating the association of HCF173 with target mRNAs, which encodes PSII reaction center proteins (e.g. J, N and D1), thus regulating its expression by modulating ribosome loading. The chain is Protein LOW PHOTOSYNTHETIC EFFICIENCY 1, chloroplastic from Arabidopsis thaliana (Mouse-ear cress).